Here is a 243-residue protein sequence, read N- to C-terminus: Nuclear ubiquitous casein and cyclin-dependent kinase substrate 1 (243 aa).

Residues 1–243 (MSRPVRNRKV…SEDEAASGED (243 aa)) are disordered. At Y13 the chain carries Phosphotyrosine. Phosphoserine is present on residues S14 and S19. Y26 carries the phosphotyrosine modification. Residues 35 to 51 (KKIRSSPREAKNKRRSG) show a composition bias toward basic residues. S54, S58, S61, S73, S75, and S79 each carry phosphoserine. Over residues 64–77 (KDVKTKKDDSHSAE) the composition is skewed to basic and acidic residues. Residues 91–100 (QQRQAASKAA) are compositionally biased toward low complexity. Over residues 111 to 124 (VGSEEEPEEDDEAP) the composition is skewed to acidic residues. Residues S113, S130, S132, and S144 each carry the phosphoserine modification. A compositionally biased stretch (acidic residues) spans 132–145 (SDEDFLMEDDDDSD). Positions 149–174 (SKKKNKKMVKKSKPERKEKKMPKPRL) are enriched in basic residues. Phosphothreonine is present on T179. A Phosphoserine modification is found at S181. A compositionally biased stretch (basic and acidic residues) spans 197-206 (TSKEKTPSPK). The residue at position 202 (T202) is a Phosphothreonine. Residues S204, S214, S223, S229, S234, and S240 each carry the phosphoserine modification. Residues 232-243 (EGSEDEAASGED) show a composition bias toward acidic residues.

Does not interact with RAD51. Phosphorylated in an ATM-dependent manner in response to DNA damage. Phosphorylated by CDK1 and casein kinase.

It is found in the nucleus. It localises to the chromosome. Functionally, chromatin-associated protein involved in DNA repair by promoting homologous recombination (HR). Binds double-stranded DNA (dsDNA) and secondary DNA structures, such as D-loop structures, but with less affinity than RAD51AP1. This Rattus norvegicus (Rat) protein is Nuclear ubiquitous casein and cyclin-dependent kinase substrate 1.